The sequence spans 388 residues: F-box protein At4g00893 (388 aa).

A disordered region spans residues 1–30; sequence MLPSPSVHMASPPPSLNMASHPPSPATASR. The 47-residue stretch at 42-88 folds into the F-box domain; the sequence is NPSFADLPSSLIEEIMLLLVLKDNIRASAACKSWYEAGVSVRVVDKH.

This chain is F-box protein At4g00893, found in Arabidopsis thaliana (Mouse-ear cress).